A 123-amino-acid chain; its full sequence is MDVFKKGFSIAREGVVGAVEKTKQGVTEAAEKTKEGVMYVGTKTKGERGTSVTSVAEKTKEQANAVSEAVVSSVNTVATKTVEEAENIVVTTGVVRKEDLEPPAQDQEAKEQEEGEEAKSGGD.

2 repeat units span residues 20-30 (EKTKQGVTEAA) and 31-41 (EKTKEGVMYVG). Residues 20–67 (EKTKQGVTEAAEKTKEGVMYVGTKTKGERGTSVTSVAEKTKEQANAVS) are 4 X 11 AA tandem repeats of [EGSA]-K-T-K-[EQ]-[GQ]-V-X(4). Residues 42–56 (TKTKGERGTSVTSVA) form a 3; approximate repeat. Copy 4 of the repeat occupies 57–67 (EKTKEQANAVS). Phosphoserine is present on residues Ser-67 and Ser-72. Positions 93-123 (GVVRKEDLEPPAQDQEAKEQEEGEEAKSGGD) are disordered. Over residues 107–123 (QEAKEQEEGEEAKSGGD) the composition is skewed to basic and acidic residues. Ser-120 carries the phosphoserine; by BARK1, CaMK2 and CK2 modification.

The protein belongs to the synuclein family. In terms of assembly, may be a centrosome-associated protein. Interacts with MYOC; affects its secretion and its aggregation. Phosphorylated. Phosphorylation by GRK5 appears to occur on residues distinct from the residue phosphorylated by other kinases. In terms of tissue distribution, specifically expressed in the peripheral nervous system. High expression in motoneurons of the brainstem. Also found in neurons of many other brain regions including the cerebellar cortex, thalamus, hypothalamus and CA1, CA2, CA3 and CA4 regions of the hippocampus.

The protein resides in the cytoplasm. It localises to the perinuclear region. It is found in the cytoskeleton. Its subcellular location is the microtubule organizing center. The protein localises to the centrosome. The protein resides in the spindle. In terms of biological role, plays a role in neurofilament network integrity. May be involved in modulating axonal architecture during development and in the adult. In vitro, increases the susceptibility of neurofilament-H to calcium-dependent proteases. May also function in modulating the keratin network in skin. Activates the MAPK and Elk-1 signal transduction pathway. The sequence is that of Gamma-synuclein (Sncg) from Rattus norvegicus (Rat).